A 486-amino-acid chain; its full sequence is Ribulose bisphosphate carboxylase large chain (486 aa).

A propeptide spanning residues 1–2 (MS) is cleaved from the precursor. Asn123 and Thr173 together coordinate substrate. Lys175 serves as the catalytic Proton acceptor. Lys177 is a substrate binding site. Lys201, Asp203, and Glu204 together coordinate Mg(2+). N6-carboxylysine is present on Lys201. Residue Ser208 is modified to Phosphoserine. The Proton acceptor role is filled by His294. 2 residues coordinate substrate: Arg295 and His327. At Thr330 the chain carries Phosphothreonine. Substrate is bound at residue Ser379.

It belongs to the RuBisCO large chain family. Type I subfamily. As to quaternary structure, heterohexadecamer of 8 large chains and 8 small chains; disulfide-linked. The disulfide link is formed within the large subunit homodimers. It depends on Mg(2+) as a cofactor. The disulfide bond which can form in the large chain dimeric partners within the hexadecamer appears to be associated with oxidative stress and protein turnover.

It is found in the plastid. Its subcellular location is the chloroplast. It catalyses the reaction 2 (2R)-3-phosphoglycerate + 2 H(+) = D-ribulose 1,5-bisphosphate + CO2 + H2O. It carries out the reaction D-ribulose 1,5-bisphosphate + O2 = 2-phosphoglycolate + (2R)-3-phosphoglycerate + 2 H(+). Its function is as follows. RuBisCO catalyzes two reactions: the carboxylation of D-ribulose 1,5-bisphosphate, the primary event in carbon dioxide fixation, as well as the oxidative fragmentation of the pentose substrate in the photorespiration process. Both reactions occur simultaneously and in competition at the same active site. The chain is Ribulose bisphosphate carboxylase large chain from Aethionema grandiflorum (Persian stone-cress).